Here is a 179-residue protein sequence, read N- to C-terminus: MPIEQKYFSLFSNLFKRLTTNNNNNNYLKMAPPNFETFKVKKLSDKAIIPQRGSKGAAGYDLSSAHELVVPAHGKALAMTDLQIAIPDGTYGRIAPRSGLAWKNFIDCGAGVIDSDYRGNVGVVLFNHSDVDFKVAVGDRVAQLIFERIVTPEPLEVDEIDETQRGAGGFGSTGVKVQN.

The N-terminal 41 residues, 1–41 (MPIEQKYFSLFSNLFKRLTTNNNNNNYLKMAPPNFETFKVK), are a transit peptide targeting the mitochondrion. DUTP-binding positions include 97–99 (RSG), 111–114 (GVID), Gly122, Arg165, and 170–171 (FG).

The protein belongs to the dUTPase family. As to quaternary structure, homotrimer. The cofactor is Mg(2+).

It localises to the mitochondrion. The catalysed reaction is dUTP + H2O = dUMP + diphosphate + H(+). The protein operates within pyrimidine metabolism; dUMP biosynthesis; dUMP from dCTP (dUTP route): step 2/2. This enzyme is involved in nucleotide metabolism: it produces dUMP, the immediate precursor of thymidine nucleotides and it decreases the intracellular concentration of dUTP so that uracil cannot be incorporated into DNA. This is Deoxyuridine 5'-triphosphate nucleotidohydrolase, mitochondrial (dut) from Dictyostelium discoideum (Social amoeba).